The sequence spans 217 residues: UPF0319 protein HS_1349 (217 aa).

The signal sequence occupies residues 1 to 21; the sequence is MKFSFAALASAMLLTSTAAFA.

The protein belongs to the UPF0319 family.

This chain is UPF0319 protein HS_1349, found in Histophilus somni (strain 129Pt) (Haemophilus somnus).